The chain runs to 131 residues: Peptide methionine sulfoxide reductase MsrB (131 aa).

Residues 8–130 (LEEWKEMLDP…NSVCLDLVPR (123 aa)) form the MsrB domain. 4 residues coordinate Zn(2+): Cys47, Cys50, Cys96, and Cys99. Cys119 (nucleophile) is an active-site residue.

The protein belongs to the MsrB Met sulfoxide reductase family. It depends on Zn(2+) as a cofactor.

It catalyses the reaction L-methionyl-[protein] + [thioredoxin]-disulfide + H2O = L-methionyl-(R)-S-oxide-[protein] + [thioredoxin]-dithiol. This chain is Peptide methionine sulfoxide reductase MsrB, found in Pseudomonas savastanoi pv. phaseolicola (strain 1448A / Race 6) (Pseudomonas syringae pv. phaseolicola (strain 1448A / Race 6)).